Reading from the N-terminus, the 49-residue chain is DNA-directed RNA polymerase subunit Rpo12 (49 aa).

Zn(2+)-binding residues include C11, C27, and C30.

The protein belongs to the archaeal Rpo12/eukaryotic RPC10 RNA polymerase subunit family. In terms of assembly, part of the RNA polymerase complex. The cofactor is Zn(2+).

It localises to the cytoplasm. The enzyme catalyses RNA(n) + a ribonucleoside 5'-triphosphate = RNA(n+1) + diphosphate. Functionally, DNA-dependent RNA polymerase (RNAP) catalyzes the transcription of DNA into RNA using the four ribonucleoside triphosphates as substrates. The chain is DNA-directed RNA polymerase subunit Rpo12 from Pyrococcus abyssi (strain GE5 / Orsay).